The following is a 137-amino-acid chain: Cytochrome c2 (137 aa).

Residues 1–21 form the signal peptide; the sequence is MKISLTAATVAALVLAAPAFA. C34, C37, H38, and M117 together coordinate heme c.

The protein belongs to the cytochrome c family. Post-translationally, binds 1 heme c group covalently per subunit.

Functionally, cytochrome c2 is found mainly in purple, non-sulfur, photosynthetic bacteria where it functions as the electron donor to the oxidized bacteriochlorophyll in the photophosphorylation pathway. However, it may also have a role in the respiratory chain and is found in some non-photosynthetic bacteria. The protein is Cytochrome c2 (cycA) of Rhodobacter capsulatus (strain ATCC BAA-309 / NBRC 16581 / SB1003).